A 1710-amino-acid polypeptide reads, in one-letter code: Neurexin-2 (1710 aa).

The signal sequence occupies residues 1-28; that stretch reads MALGSRWQPPPQLPPLLLLLALAAGVRG. Residues 29 to 206 enclose the Laminin G-like 1 domain; sequence LEFGGGPGQW…LRGAAADPLC (178 aa). Residues 29 to 1634 lie on the Extracellular side of the membrane; that stretch reads LEFGGGPGQW…EVIRESSSTT (1606 aa). N-linked (GlcNAc...) asparagine glycosylation occurs at N60. In terms of domain architecture, EGF-like 1 spans 202–242; that stretch reads ADPLCAPARNPCANGGLCTVLAPGEVGCDCSHTGFGGKFCS. Cystine bridges form between C206–C219, C213–C229, and C231–C241. Laminin G-like domains are found at residues 289–486 and 493–686; these read VATF…SFRC and DPVT…APFC. Ca(2+) is bound at residue D335. N338 carries an N-linked (GlcNAc...) asparagine glycan. L352 and M420 together coordinate Ca(2+). Cystine bridges form between C450-C486, C657-C686, C694-C705, C699-C714, and C716-C726. An EGF-like 2 domain is found at 690–727; that stretch reads TLKQCASAPCRNGGICREGWNRFVCDCIGTGFLGRVCE. Laminin G-like domains lie at 732 to 904 and 918 to 1093; these read VLSY…ITYC and DPVT…ERGC. Positions 779 and 796 each coordinate Ca(2+). A glycan (N-linked (GlcNAc...) asparagine) is linked at N841. R854 is a Ca(2+) binding site. Cystine bridges form between C1065-C1093, C1100-C1111, C1105-C1120, and C1122-C1132. Residues 1096 to 1133 form the EGF-like 3 domain; it reads PSTTCTEESCANQGVCLQQWDGFTCDCTMTSYGGPVCN. One can recognise a Laminin G-like 6 domain in the interval 1137 to 1345; it reads TTYIFGKGGA…HLRLVGEGPS (209 aa). Ca(2+)-binding residues include D1189, V1206, I1288, and N1290. The O-linked (Xyl...) (heparan sulfate) serine glycan is linked to S1400. Disordered stretches follow at residues 1458 to 1508 and 1587 to 1621; these read ATQD…LPPT and EPRRPPPLRPGVTSAPGFPRLPTANPTGPGERGPP. Residues 1635-1655 traverse the membrane as a helical segment; it reads GMVVGIVAAAALCILILLYAM. At 1656-1710 the chain is on the cytoplasmic side; that stretch reads YKYRNRDEGSYQVDQSRNYISNSAQSNGAVVKEKAPAAPKTPSKAKKNKDKEYYV. Residues 1677 to 1710 form a disordered region; the sequence is NSAQSNGAVVKEKAPAAPKTPSKAKKNKDKEYYV.

As to quaternary structure, the laminin G-like domain 1 binds to NXPH1. Interacts with PATJ. Interacts with CBLN1, CBLN2 and, less avidly, with CBLN4. Specific isoforms bind neuroligins NLGN1, NLGN2 and NLGN3. Specific isoforms bind to alpha-dystroglycan. Interacts (via Laminin G-like 1 domain) with IGSF21 (Ig-like 1 domain) in a trans-interaction manner. Interacts with CLSTN3. Post-translationally, O-glycosylated; contains heparan sulfate. Heparan sulfate attachment is required for synapse development by mediating interactions with neuroligins.

The protein localises to the presynaptic cell membrane. In terms of biological role, neuronal cell surface protein that may be involved in cell recognition and cell adhesion. May mediate intracellular signaling. The sequence is that of Neurexin-2 from Mus musculus (Mouse).